Consider the following 601-residue polypeptide: Elongation factor 4 (601 aa).

The 183-residue stretch at 7–189 folds into the tr-type G domain; sequence RNIRNFSIIA…AIVHRIPPPK (183 aa). GTP is bound by residues 19-24 and 136-139; these read DHGKST and NKID.

It belongs to the TRAFAC class translation factor GTPase superfamily. Classic translation factor GTPase family. LepA subfamily.

The protein resides in the cell inner membrane. It catalyses the reaction GTP + H2O = GDP + phosphate + H(+). Required for accurate and efficient protein synthesis under certain stress conditions. May act as a fidelity factor of the translation reaction, by catalyzing a one-codon backward translocation of tRNAs on improperly translocated ribosomes. Back-translocation proceeds from a post-translocation (POST) complex to a pre-translocation (PRE) complex, thus giving elongation factor G a second chance to translocate the tRNAs correctly. Binds to ribosomes in a GTP-dependent manner. The protein is Elongation factor 4 of Xanthomonas campestris pv. campestris (strain 8004).